The following is a 1571-amino-acid chain: Phospholipid-transporting ATPase DNF1 (1571 aa).

The segment at 1–94 (MSGTFHGDGH…TPKLNNGSGT (94 aa)) is disordered. Residues 1–214 (MSGTFHGDGH…TFLPKNILFQ (214 aa)) lie on the Cytoplasmic side of the membrane. Residues 29–40 (EDTHIAPTHFDD) are compositionally biased toward basic and acidic residues. Polar residues predominate over residues 42–56 (ATSNKYSRPQVSFND). Ser-53 carries the post-translational modification Phosphoserine. Positions 66–76 (AEEFTFNDDTE) are enriched in acidic residues. At Thr-70 the chain carries Phosphothreonine. The span at 80–93 (HSFQPTPKLNNGSG) shows a compositional bias: polar residues. A Phosphoserine modification is found at Ser-81. Thr-85 carries the phosphothreonine modification. At Ser-92 the chain carries Phosphoserine. Thr-94 is modified (phosphothreonine). Ser-104 bears the Phosphoserine mark. Thr-109 is subject to Phosphothreonine. The chain crosses the membrane as a helical span at residues 215–235 (FHNFANVYFLVLIILGAFQIF). The interval 234–241 (IFGVTNPG) is involved in phosphatidylcholine substrate selection. Topologically, residues 236–239 (GVTN) are extracellular. The chain crosses the membrane as a helical span at residues 240–260 (PGLSAVPLVVIVIITAIKDAI). Residues 261–553 (EDSRRTVLDL…RISRELNFSV (293 aa)) are Cytoplasmic-facing. 4 positions are modified to phosphoserine: Ser-351, Ser-354, Ser-358, and Ser-365. Tyr-368 carries the post-translational modification Phosphotyrosine. Residues 554–574 (VINFVLLFILCFVSGIANGVY) form a helical membrane-spanning segment. The Extracellular segment spans residues 575 to 594 (YDKKGRSRFSYEFGTIAGSA). Residues 586 to 590 (EFGTI) form an involved in phosphatidylcholine substrate selection region. Residues 595-615 (ATNGFVSFWVAVILYQSLVPI) form a helical membrane-spanning segment. The Cytoplasmic portion of the chain corresponds to 616–1188 (SLYISVEIIK…WSYKRLAEMI (573 aa)). The active-site 4-aspartylphosphate intermediate is the Asp-667. ATP is bound by residues Asp-667, Lys-668, Thr-669, Glu-801, Phe-842, Ser-844, Lys-847, and Lys-871. Asp-667 contributes to the Mg(2+) binding site. Residue Thr-669 participates in Mg(2+) binding. Lys-895 is covalently cross-linked (Glycyl lysine isopeptide (Lys-Gly) (interchain with G-Cter in ubiquitin)). The ATP site is built by Arg-909, Thr-910, Thr-989, Gly-990, Asp-991, Arg-1104, and Lys-1110. Residue Asp-1130 participates in Mg(2+) binding. 2 residues coordinate ATP: Asn-1133 and Asp-1134. Asp-1134 is a binding site for Mg(2+). The chain crosses the membrane as a helical span at residues 1189 to 1209 (PEFFYKNMIFALALFWYGIYN). The Extracellular portion of the chain corresponds to 1210 to 1219 (DFDGSYLYEY). A helical membrane pass occupies residues 1220–1240 (TYMMFYNLAFTSLPVIFLGIL). Residues 1241 to 1270 (DQDVNDTISLVVPQLYRVGILRKEWNQRKF) are Cytoplasmic-facing. Residues 1271–1291 (LWYMLDGLYQSIICFFFPYLV) traverse the membrane as a helical segment. The Extracellular segment spans residues 1292–1307 (YHKNMIVTSNGLGLDH). A helical membrane pass occupies residues 1308 to 1328 (RYFVGVYVTTIAVISCNTYVL). At 1329 to 1334 (LHQYRW) the chain is on the cytoplasmic side. Residues 1335 to 1355 (DWFSGLFIALSCLVVFAWTGI) traverse the membrane as a helical segment. The Extracellular segment spans residues 1356-1375 (WSSAIASREFFKAAARIYGA). A helical membrane pass occupies residues 1376 to 1396 (PSFWAVFFVAVLFCLLPRFTY). Position 1393 (Arg-1393) interacts with a 1,2-diacyl-sn-glycero-3-phospho-L-serine. Topologically, residues 1397 to 1571 (DSFQKFFYPT…ASLIGTQQNN (175 aa)) are cytoplasmic. Ser-1506 carries the phosphoserine modification. Thr-1551 carries the phosphothreonine modification. Phosphoserine occurs at positions 1552 and 1563.

The protein belongs to the cation transport ATPase (P-type) (TC 3.A.3) family. Type IV subfamily. In terms of assembly, component of a flippase complex consisting of DNF1 and LEM3. Interacts with LEM3; the interaction is direct and required for their mutual export from the endoplasmic reticulum. Requires Mg(2+) as cofactor. Post-translationally, phosphorylated by FPK1 and KIN82.

It is found in the cell membrane. The protein resides in the endosome membrane. The protein localises to the golgi apparatus. Its subcellular location is the trans-Golgi network membrane. It localises to the cell septum. It is found in the bud. The enzyme catalyses ATP + H2O + phospholipidSide 1 = ADP + phosphate + phospholipidSide 2.. It catalyses the reaction a 1,2-diacyl-sn-glycero-3-phosphoethanolamine(out) + ATP + H2O = a 1,2-diacyl-sn-glycero-3-phosphoethanolamine(in) + ADP + phosphate + H(+). The catalysed reaction is a 1,2-diacyl-sn-glycero-3-phosphocholine(out) + ATP + H2O = a 1,2-diacyl-sn-glycero-3-phosphocholine(in) + ADP + phosphate + H(+). It carries out the reaction a beta-D-glucosyl-(1&lt;-&gt;1')-N-acylsphing-4-enine(out) + ATP + H2O = a beta-D-glucosyl-(1&lt;-&gt;1')-N-acylsphing-4-enine(in) + ADP + phosphate + H(+). The enzyme catalyses a 1,2-diacyl-sn-glycero-3-phospho-L-serine(out) + ATP + H2O = a 1,2-diacyl-sn-glycero-3-phospho-L-serine(in) + ADP + phosphate + H(+). Its function is as follows. Catalytic component of a P4-ATPase flippase complex which catalyzes the hydrolysis of ATP coupled to the transport of glucosylceramide, phosphatidylcholine, phosphatidylethanolamine, and small amounts of phosphatidylserine from the lumenal to the cytosolic leaflet of the cell membrane and ensures the maintenance of asymmetric distribution of phospholipids. Does not appear to transport sphingomyelin, inositol phosphoceramide, or phosphatidic acid. Required for efficient endocytosis. This Saccharomyces cerevisiae (strain ATCC 204508 / S288c) (Baker's yeast) protein is Phospholipid-transporting ATPase DNF1.